We begin with the raw amino-acid sequence, 252 residues long: Vitamin B12 import ATP-binding protein BtuD (252 aa).

Positions 2–237 constitute an ABC transporter domain; it reads IQIKSLSVGA…EQLESVFNTQ (236 aa). Residue 30–37 participates in ATP binding; the sequence is GPNGSGKS.

Belongs to the ABC transporter superfamily. Vitamin B12 importer (TC 3.A.1.13.1) family. As to quaternary structure, the complex is composed of two ATP-binding proteins (BtuD), two transmembrane proteins (BtuC) and a solute-binding protein (BtuF).

The protein resides in the cell inner membrane. It carries out the reaction an R-cob(III)alamin(out) + ATP + H2O = an R-cob(III)alamin(in) + ADP + phosphate + H(+). Its function is as follows. Part of the ABC transporter complex BtuCDF involved in vitamin B12 import. Responsible for energy coupling to the transport system. This Vibrio atlanticus (strain LGP32) (Vibrio splendidus (strain Mel32)) protein is Vitamin B12 import ATP-binding protein BtuD.